The following is a 249-amino-acid chain: 2,3-bisphosphoglycerate-dependent phosphoglycerate mutase (249 aa).

Residues 9-16 (RHGQSQWN), 22-23 (TG), R61, 88-91 (ERHY), K99, 115-116 (RR), and 184-185 (GN) each bind substrate. Catalysis depends on H10, which acts as the Tele-phosphohistidine intermediate. The active-site Proton donor/acceptor is the E88.

Belongs to the phosphoglycerate mutase family. BPG-dependent PGAM subfamily. As to quaternary structure, homodimer.

The enzyme catalyses (2R)-2-phosphoglycerate = (2R)-3-phosphoglycerate. It participates in carbohydrate degradation; glycolysis; pyruvate from D-glyceraldehyde 3-phosphate: step 3/5. Its function is as follows. Catalyzes the interconversion of 2-phosphoglycerate and 3-phosphoglycerate. The sequence is that of 2,3-bisphosphoglycerate-dependent phosphoglycerate mutase from Stenotrophomonas maltophilia (strain K279a).